The chain runs to 376 residues: Lipoyl synthase 1, mitochondrial (376 aa).

Cys-109, Cys-114, Cys-120, Cys-140, Cys-144, Cys-147, and Ser-356 together coordinate [4Fe-4S] cluster. Residues 125–345 (ETGTATATIM…QTLGMEMGFR (221 aa)) enclose the Radical SAM core domain.

This sequence belongs to the radical SAM superfamily. Lipoyl synthase family. The cofactor is [4Fe-4S] cluster.

It localises to the mitochondrion. The catalysed reaction is [[Fe-S] cluster scaffold protein carrying a second [4Fe-4S](2+) cluster] + N(6)-octanoyl-L-lysyl-[protein] + 2 oxidized [2Fe-2S]-[ferredoxin] + 2 S-adenosyl-L-methionine + 4 H(+) = [[Fe-S] cluster scaffold protein] + N(6)-[(R)-dihydrolipoyl]-L-lysyl-[protein] + 4 Fe(3+) + 2 hydrogen sulfide + 2 5'-deoxyadenosine + 2 L-methionine + 2 reduced [2Fe-2S]-[ferredoxin]. Its pathway is protein modification; protein lipoylation via endogenous pathway; protein N(6)-(lipoyl)lysine from octanoyl-[acyl-carrier-protein]: step 2/2. Its function is as follows. Catalyzes the radical-mediated insertion of two sulfur atoms into the C-6 and C-8 positions of the octanoyl moiety bound to the lipoyl domains of lipoate-dependent enzymes, thereby converting the octanoylated domains into lipoylated derivatives. This is Lipoyl synthase 1, mitochondrial from Pisum sativum (Garden pea).